Reading from the N-terminus, the 328-residue chain is Malate dehydrogenase (328 aa).

NAD(+) is bound at residue 11 to 17 (GAAGQIG). Substrate-binding residues include Arg-94 and Arg-100. NAD(+)-binding positions include Asn-107, Gln-114, and 131–133 (VGN). 2 residues coordinate substrate: Asn-133 and Arg-164. His-189 functions as the Proton acceptor in the catalytic mechanism.

The protein belongs to the LDH/MDH superfamily. MDH type 2 family.

The catalysed reaction is (S)-malate + NAD(+) = oxaloacetate + NADH + H(+). In terms of biological role, catalyzes the reversible oxidation of malate to oxaloacetate. This Xylella fastidiosa (strain M12) protein is Malate dehydrogenase.